The chain runs to 1378 residues: S-cell enriched with leucine-rich repeat-containing protein slrA (1378 aa).

Residues 17 to 37 (IFKILYCYLFTSLLLILSTWV) traverse the membrane as a helical segment. N-linked (GlcNAc...) asparagine glycosylation is found at Asn59, Asn112, Asn143, Asn172, and Asn201. LRR repeat units lie at residues 143 to 165 (NLTG…LPYL), 167 to 188 (HLRN…GLLK), 191 to 212 (SLVA…ADSK), 213 to 235 (AISY…WKTP), 236 to 257 (NLLF…EFFR), 260 to 281 (SLDY…LSKS), 282 to 304 (RISY…TCWK), 307 to 329 (SLRI…IFDH), and 331 to 353 (PLQY…LDCA). N-linked (GlcNAc...) asparagine glycans are attached at residues Asn265, Asn287, and Asn296. N-linked (GlcNAc...) asparagine glycans are attached at residues Asn416, Asn436, Asn451, Asn491, Asn513, Asn596, Asn605, Asn634, Asn704, Asn710, Asn740, Asn741, Asn771, Asn788, Asn801, Asn826, Asn843, Asn861, Asn875, and Asn907. A coiled-coil region spans residues 886 to 946 (SLNNNNNNNN…NNNENNNENK (61 aa)). The segment covering 891-909 (NNNNNNNNNKNNNNNNNDS) has biased composition (low complexity). A disordered region spans residues 891–945 (NNNNNNNNNKNNNNNNNDSNNEKEVVEDEEEDLDYSSQNDNNNINNNNNENNNEN). Residues 915-924 (VVEDEEEDLD) show a composition bias toward acidic residues. Positions 929–945 (NDNNNINNNNNENNNEN) are enriched in low complexity. N-linked (GlcNAc...) asparagine glycans are attached at residues Asn953, Asn970, Asn1090, and Asn1100. A helical membrane pass occupies residues 1160–1180 (YYIVFFGCASGLILVLVICIV). A compositionally biased stretch (low complexity) spans 1227–1276 (DLNNNNNNNNNNNNNNNNNNNNNNNNNNNNNNNNNFNDGSDTFNNNNKKN). Residues 1227–1378 (DLNNNNNNNN…KKHLTIINKK (152 aa)) form a disordered region. Residues 1289–1304 (DGKENDIKNINNKKDE) are compositionally biased toward basic and acidic residues. The span at 1305-1324 (KEDDGDDDDDEDDDEYEDDT) shows a compositional bias: acidic residues. A compositionally biased stretch (low complexity) spans 1328–1353 (SSGNSSRSKGSDGGSSSNSLSSDKQS). N-linked (GlcNAc...) asparagine glycans are attached at residues Asn1331 and Asn1360. The span at 1354–1364 (FNNGNENNSII) shows a compositional bias: polar residues. Basic residues predominate over residues 1368 to 1378 (KKKHLTIINKK).

It localises to the membrane. The protein is S-cell enriched with leucine-rich repeat-containing protein slrA (slrA) of Dictyostelium discoideum (Social amoeba).